Here is a 431-residue protein sequence, read N- to C-terminus: MIRLTPASAHGLHGHVTVPGDKSISHRALMFGAIAKGQTVITNFLASDDVLHTMTVFRNLGVAIQQNENSVRIQGQGFDGLTPPKKPLDMGNSGTSTRLLMGLLSKQNFDMSIIGDESLSQRPMTRVMKPLTEMGAKIDLTANGTLPGIIQANATLRGITYDMPVASAQVKSAILLAGIQAEGETCVIEKIASRDHTERMLRQFGGQLESKNGVITLKKQQQLQGQHVDVPADISSAAFFLVAALITPNSELTINRVGINPTRDGILKILTRMGASIEVTPIDTQGEPLADLTVRTQTLHGIDITAADIPSAVDELPIIALAATQADGDTIISGAEELRVKETDRIATVISELSKLGANIEEKPDGMIIHGGQSLTADNDAVLLDSCGDHRIAMMNAIAALITTGDVILTGEDAMSVSYPGFLEDLSEVML.

3-phosphoshikimate-binding residues include lysine 22, serine 23, and arginine 27. Residue lysine 22 coordinates phosphoenolpyruvate. Residues glycine 94 and arginine 122 each coordinate phosphoenolpyruvate. 4 residues coordinate 3-phosphoshikimate: serine 167, glutamine 169, aspartate 314, and lysine 341. Glutamine 169 serves as a coordination point for phosphoenolpyruvate. Aspartate 314 acts as the Proton acceptor in catalysis. Phosphoenolpyruvate-binding residues include arginine 345 and arginine 391.

This sequence belongs to the EPSP synthase family. As to quaternary structure, monomer.

Its subcellular location is the cytoplasm. It catalyses the reaction 3-phosphoshikimate + phosphoenolpyruvate = 5-O-(1-carboxyvinyl)-3-phosphoshikimate + phosphate. It functions in the pathway metabolic intermediate biosynthesis; chorismate biosynthesis; chorismate from D-erythrose 4-phosphate and phosphoenolpyruvate: step 6/7. Its function is as follows. Catalyzes the transfer of the enolpyruvyl moiety of phosphoenolpyruvate (PEP) to the 5-hydroxyl of shikimate-3-phosphate (S3P) to produce enolpyruvyl shikimate-3-phosphate and inorganic phosphate. This Leuconostoc citreum (strain KM20) protein is 3-phosphoshikimate 1-carboxyvinyltransferase.